We begin with the raw amino-acid sequence, 623 residues long: Glutathione import ATP-binding protein GsiA (623 aa).

ABC transporter domains follow at residues 15–269 (VENL…RALL) and 314–564 (LRVR…RKLL). ATP-binding positions include 49 to 56 (GESGSGKS) and 357 to 364 (GESGSGKS).

The protein belongs to the ABC transporter superfamily. Glutathione importer (TC 3.A.1.5.11) family. In terms of assembly, the complex is composed of two ATP-binding proteins (GsiA), two transmembrane proteins (GsiC and GsiD) and a solute-binding protein (GsiB).

The protein localises to the cell inner membrane. The enzyme catalyses glutathione(out) + ATP + H2O = glutathione(in) + ADP + phosphate + H(+). In terms of biological role, part of the ABC transporter complex GsiABCD involved in glutathione import. Responsible for energy coupling to the transport system. The protein is Glutathione import ATP-binding protein GsiA of Escherichia coli O6:H1 (strain CFT073 / ATCC 700928 / UPEC).